The sequence spans 77 residues: NEDD8-like protein RUB1 (77 aa).

Residues Met1–Arg74 form the Ubiquitin-like domain. Residue Gly76 forms a Glycyl lysine isopeptide (Gly-Lys) (interchain with K-? in acceptor proteins) linkage. A propeptide is located at residue Asn77.

As to quaternary structure, interacts with CDC53 and DCN1.

Its function is as follows. Ubiquitin-like protein modifier that can be covalently attached to lysine residues of target proteins. Activated by the dimeric UBA3-ULA1 E1 enzyme and conjugated by the E2 UBC12 to substrate proteins. RUB1-conjugated (neddylated) substrate proteins include the cullins CDC53, RTT101 and CUL3, and the modification enhances the ubiquitin-ligase activity of the corresponding cullin-RING-based E3 ubiquitin-protein ligase complexes (CRLs). In Saccharomyces cerevisiae (strain ATCC 204508 / S288c) (Baker's yeast), this protein is NEDD8-like protein RUB1 (RUB1).